The sequence spans 117 residues: uncharacterized protein (117 aa).

Residues 5 to 50 (DKIHNTNEQITALEKKKYQIETTLLEKQRDLLKLETQQNKAKLELL) adopt a coiled-coil conformation.

This is an uncharacterized protein from Bacillus pumilus (Bacillus mesentericus).